The chain runs to 76 residues: Conotoxin Vc6.6 (76 aa).

The first 22 residues, 1–22 (MKLTCMVIVAVLFLTANTFVTA), serve as a signal peptide directing secretion. The propeptide occupies 23 to 52 (VPHSSNALENLYLKAHHEMNNPKDSELNKR). 3 disulfides stabilise this stretch: Cys-53/Cys-67, Cys-60/Cys-71, and Cys-66/Cys-75.

It belongs to the conotoxin O1 superfamily. Expressed by the venom duct.

It localises to the secreted. This Conus victoriae (Queen Victoria cone) protein is Conotoxin Vc6.6.